Consider the following 107-residue polypeptide: Integration host factor subunit beta (107 aa).

Residues 76–107 are disordered; sequence FVPHFKPGKELRERVDGRAGEPLKADDPDDDR. Over residues 82 to 101 the composition is skewed to basic and acidic residues; that stretch reads PGKELRERVDGRAGEPLKAD.

It belongs to the bacterial histone-like protein family. Heterodimer of an alpha and a beta chain.

This protein is one of the two subunits of integration host factor, a specific DNA-binding protein that functions in genetic recombination as well as in transcriptional and translational control. The chain is Integration host factor subunit beta from Burkholderia cenocepacia (strain HI2424).